The chain runs to 266 residues: PTS system mannose-specific EIIC component (266 aa).

At M1 the chain carries N-formylmethionine. Topologically, residues 1-4 (MEIT) are periplasmic. In terms of domain architecture, PTS EIIC type-4 spans 1-237 (MEITTLQIVL…GVIGTVMAVL (237 aa)). The stretch at 5 to 43 (TLQIVLVFIVACIAGMGSILDEFQFHRPLIACTLVGIVL) is an intramembrane region. Residues 44-46 (GDM) are Periplasmic-facing. An intramembrane segment occupies 47-86 (KTGIIIGGTLEMIALGWMNIGAAVAPDAALASIISTILVI). Residues 87–90 (AGHQ) lie on the Periplasmic side of the membrane. Residues 91-124 (SIGAGIALAIPLAAAGQVLTIIVRTITVAFQHAA) are membrane-embedded. At 125–132 (DKAADNGN) the chain is on the cytoplasmic side. Over 133–160 (LTAISWIHVSSLFLQAMRVAIPAVIVAL) the chain traverses the membrane. The Periplasmic portion of the chain corresponds to 161–176 (SVGTSEVQNMLNAIPE). The hydrophobic stretch at 177–200 (VVTNGLNIAGGMIVVVGYAMVINM) threads the membrane. Over 201 to 207 (MRAGYLM) the chain is Cytoplasmic. Positions 208–218 (PFFYLGFVTAA) form a transmembrane segment. Residues 219–224 (FTNFNL) lie on the Periplasmic side of the membrane. A transmembrane helix spans residues 225-242 (VALGVIGTVMAVLYIQLS). The Cytoplasmic segment spans residues 243–266 (PKYNRVAGAPAQAAGNNDLDNELD).

As to quaternary structure, homotrimer of protomers that are composed of two subunits, IIC and IID.

The protein resides in the cell inner membrane. Functionally, the phosphoenolpyruvate-dependent sugar phosphotransferase system (sugar PTS), a major carbohydrate active transport system, catalyzes the phosphorylation of incoming sugar substrates concomitantly with their translocation across the cell membrane. The enzyme II ManXYZ PTS system is involved in mannose transport. The polypeptide is PTS system mannose-specific EIIC component (manY) (Escherichia coli O157:H7).